The following is a 2073-amino-acid chain: Dedicator of cytokinesis protein 11 (2073 aa).

Phosphoserine is present on serine 12. Threonine 16 is modified (phosphothreonine). Residues serine 23 and serine 161 each carry the phosphoserine modification. Positions 165–272 (GVIKQGWLHK…WLITLKKIIQ (108 aa)) constitute a PH domain. The residue at position 248 (tyrosine 248) is a Phosphotyrosine. A phosphoserine mark is found at serine 306, serine 440, and serine 445. The C2 DOCK-type domain occupies 640–818 (KNHLYVYPLQ…PLLKIKSHLE (179 aa)). The tract at residues 1226–1267 (FQNGHGIKREDSRGSLIPEGATGFPDQGNTGENTRQSSTRSS) is disordered. 2 positions are modified to phosphoserine: serine 1237 and serine 1240. Residues 1609 to 2036 (KSYASTPELR…LSDIIHEQIL (428 aa)) form the DOCKER domain.

This sequence belongs to the DOCK family. As to quaternary structure, interacts with CDC42.

Guanine nucleotide-exchange factor (GEF) that activates CDC42 by exchanging bound GDP for free GTP. Required for marginal zone (MZ) B-cell development, is associated with early bone marrow B-cell development, MZ B-cell formation, MZ B-cell number and marginal metallophilic macrophages morphology. Facilitates filopodia formation through the activation of CDC42. The sequence is that of Dedicator of cytokinesis protein 11 from Homo sapiens (Human).